We begin with the raw amino-acid sequence, 766 residues long: MSPLARTPRKTSVLDTVEHAATTPDQPQPYGELGLKDDEYRRIRQILGRRPTDTELAMYSVMWSEHCSYKSSKVHLRYFGETTSDEMRAAMLAGIGENAGVVDIGDGWAVTFKVESHNHPSYVEPYQGAATGVGGIVRDIMAMGARPVAVMDQLRFGAADAPDTRRVLDGVVRGIGGYGNSLGLPNIGGETVFDPCYAGNPLVNALCVGVLRQEDLHLAFASGAGNKIILFGARTGLDGIGGVSVLASDTFDAEGSRKKLPSVQVGDPFMEKVLIECCLELYAGGLVIGIQDLGGAGLSCATSELASAGDGGMTIQLDSVPLRAKEMTPAEVLCSESQERMCAVVSPKNVDAFLAVCRKWEVLATVIGEVTDGDRLQITWHGETVVDVPPRTVAHEGPVYQRPVARPDTQDALNADRSAKLSRPVTGDELRATLLALLGSPHLCSRAFITEQYDRYVRGNTVLAEHADGGMLRIDQSTGRGIAVSTDASGRYTLLDPYAGAQLALAEAYRNVAVTGATPVAVTNCLNFGSPEDPGVMWQFTQAVRGLADGCADLGIPVTGGNVSFYNQTGSAAILPTPVVGVLGVIDDVRRRIPTGLGAEPGETLMLLGDTRDEFDGSVWAQVTADHLGGLPPVVDLAREKLLAAVLSSASRDGLVSAAHDLSEGGLAQAIVESALAGETGCRIVLPEGADPFVLLFSESAGRVLVAVPRTEESRFRGMCEARGLPAVRIGVVDQGSDAVEVQGLFAVSLAELRATSEAVLPRYFG.

Residue H66 is part of the active site. Y69 and K113 together coordinate ATP. E115 serves as a coordination point for Mg(2+). Residues 116 to 119 (SHNH) and R138 contribute to the substrate site. H117 (proton acceptor) is an active-site residue. Mg(2+) is bound at residue D139. A substrate-binding site is contributed by Q264. Position 292 (D292) interacts with Mg(2+). Position 336-338 (336-338 (ESQ)) interacts with substrate. 2 residues coordinate ATP: N524 and G561. N562 contributes to the Mg(2+) binding site. S564 contacts substrate.

It belongs to the FGAMS family. Monomer. Part of the FGAM synthase complex composed of 1 PurL, 1 PurQ and 2 PurS subunits.

The protein localises to the cytoplasm. It carries out the reaction N(2)-formyl-N(1)-(5-phospho-beta-D-ribosyl)glycinamide + L-glutamine + ATP + H2O = 2-formamido-N(1)-(5-O-phospho-beta-D-ribosyl)acetamidine + L-glutamate + ADP + phosphate + H(+). It functions in the pathway purine metabolism; IMP biosynthesis via de novo pathway; 5-amino-1-(5-phospho-D-ribosyl)imidazole from N(2)-formyl-N(1)-(5-phospho-D-ribosyl)glycinamide: step 1/2. Its function is as follows. Part of the phosphoribosylformylglycinamidine synthase complex involved in the purines biosynthetic pathway. Catalyzes the ATP-dependent conversion of formylglycinamide ribonucleotide (FGAR) and glutamine to yield formylglycinamidine ribonucleotide (FGAM) and glutamate. The FGAM synthase complex is composed of three subunits. PurQ produces an ammonia molecule by converting glutamine to glutamate. PurL transfers the ammonia molecule to FGAR to form FGAM in an ATP-dependent manner. PurS interacts with PurQ and PurL and is thought to assist in the transfer of the ammonia molecule from PurQ to PurL. The sequence is that of Phosphoribosylformylglycinamidine synthase subunit PurL from Mycobacterium tuberculosis (strain CDC 1551 / Oshkosh).